Consider the following 66-residue polypeptide: Ocellatin-PT4 (66 aa).

An N-terminal signal peptide occupies residues 1–22 (MAFLKKSLFLVLFLGLVSLSIC). Positions 23–39 (DEEKRQDEDDDDDDDEE) are excised as a propeptide. Residue V66 is modified to Valine amide.

As to expression, expressed by the skin glands.

Its subcellular location is the secreted. Has antibacterial activity against Gram-negative bacteria E.coli ATCC 25922 (MIC=80 uM), K.pneumoniae ATCC 700603 (MIC=310 uM) and S.choleraesuis ATCC 14028 (MIC=310 uM). Shows no hemolytic activity and no cytotoxicity. The protein is Ocellatin-PT4 of Leptodactylus pustulatus (Ceara white-lipped frog).